The chain runs to 466 residues: Uridine kinase-like protein 3 (466 aa).

A uridine kinase region spans residues 41-246; it reads HGQPFVIGVA…IVQHIHTKLG (206 aa). The interval 256–466 is uracil phosphoribosyltransferase; sequence NLYVIQSTFQ…GDRYFGTDDE (211 aa). GTP is bound by residues Lys-280, Arg-289, and 323-326; that span reads CKKL. 5-phospho-alpha-D-ribose 1-diphosphate is bound by residues Arg-333 and Arg-358. Residue Arg-378 participates in GTP binding. Residues Asp-384, 389–392, and Glu-455 each bind 5-phospho-alpha-D-ribose 1-diphosphate; that span reads TGNS. Residue 454 to 456 coordinates uracil; the sequence is GEF.

This sequence in the N-terminal section; belongs to the uridine kinase family. The protein in the C-terminal section; belongs to the UPRTase family. The cofactor is Mg(2+).

The catalysed reaction is UMP + diphosphate = 5-phospho-alpha-D-ribose 1-diphosphate + uracil. It catalyses the reaction cytidine + ATP = CMP + ADP + H(+). It carries out the reaction uridine + ATP = UMP + ADP + H(+). Its pathway is pyrimidine metabolism; UMP biosynthesis via salvage pathway; UMP from uracil: step 1/1. The protein operates within pyrimidine metabolism; CTP biosynthesis via salvage pathway; CTP from cytidine: step 1/3. It functions in the pathway pyrimidine metabolism; UMP biosynthesis via salvage pathway; UMP from uridine: step 1/1. With respect to regulation, allosterically activated by GTP. Functionally, involved in the pyrimidine salvage pathway. The uracil phosphoribosyltransferase (UPRT) activity, that catalyzes the conversion of uracil and 5-phospho-alpha-D-ribose 1-diphosphate (PRPP) to UMP and diphosphate, is unsure. This Arabidopsis thaliana (Mouse-ear cress) protein is Uridine kinase-like protein 3 (UKL3).